Reading from the N-terminus, the 237-residue chain is Ubiquinone biosynthesis O-methyltransferase (237 aa).

S-adenosyl-L-methionine-binding residues include arginine 38, glycine 58, aspartate 79, and methionine 124.

This sequence belongs to the methyltransferase superfamily. UbiG/COQ3 family.

The catalysed reaction is a 3-demethylubiquinol + S-adenosyl-L-methionine = a ubiquinol + S-adenosyl-L-homocysteine + H(+). It carries out the reaction a 3-(all-trans-polyprenyl)benzene-1,2-diol + S-adenosyl-L-methionine = a 2-methoxy-6-(all-trans-polyprenyl)phenol + S-adenosyl-L-homocysteine + H(+). The protein operates within cofactor biosynthesis; ubiquinone biosynthesis. Its function is as follows. O-methyltransferase that catalyzes the 2 O-methylation steps in the ubiquinone biosynthetic pathway. The polypeptide is Ubiquinone biosynthesis O-methyltransferase (Acinetobacter baumannii (strain SDF)).